The following is a 307-amino-acid chain: UDP-N-acetylenolpyruvoylglucosamine reductase (307 aa).

In terms of domain architecture, FAD-binding PCMH-type spans 34–197 (VGGNAEALFR…LSASLKGRPG (164 aa)). Arg177 is an active-site residue. The active-site Proton donor is the Ser226. Residue Glu296 is part of the active site.

This sequence belongs to the MurB family. FAD is required as a cofactor.

The protein resides in the cytoplasm. The enzyme catalyses UDP-N-acetyl-alpha-D-muramate + NADP(+) = UDP-N-acetyl-3-O-(1-carboxyvinyl)-alpha-D-glucosamine + NADPH + H(+). The protein operates within cell wall biogenesis; peptidoglycan biosynthesis. In terms of biological role, cell wall formation. The chain is UDP-N-acetylenolpyruvoylglucosamine reductase from Paramagnetospirillum magneticum (strain ATCC 700264 / AMB-1) (Magnetospirillum magneticum).